The following is a 214-amino-acid chain: Calcineurin B-like protein 8 (214 aa).

4 EF-hand domains span residues 35–70 (EIEA…RNGS), 71–106 (MQNL…FHPY), 108–143 (PEHE…LLGE), and 152–187 (SIEA…NPSI). Ca(2+)-binding residues include D165, N167, D169, K171, and E176. Residue S205 is modified to Phosphoserine.

The protein belongs to the calcineurin regulatory subunit family. Interacts with CIPK23. Interacts with CIPK14 at the cell membrane exclusively.

The protein resides in the cytoplasm. It localises to the nucleus. It is found in the cell membrane. In terms of biological role, acts as a calcium sensor. CBL proteins interact with CIPK serine-threonine protein kinases. Binding of a CBL protein to the regulatory NAF domain of a CIPK protein lead to the activation of the kinase in a calcium-dependent manner. The chain is Calcineurin B-like protein 8 (CBL8) from Arabidopsis thaliana (Mouse-ear cress).